A 362-amino-acid chain; its full sequence is Serine/threonine-protein kinase SBK2 (362 aa).

A compositionally biased stretch (basic and acidic residues) spans 1–11 (MPGKQSEDKPM). Residues 1–26 (MPGKQSEDKPMEVSTVEDGGDEGLGG) form a disordered region. The region spanning 62 to 330 (YEEVRPLGQG…IKSYLGQPWK (269 aa)) is the Protein kinase domain. ATP-binding positions include 68–76 (LGQGRFGRV) and K91. The Proton acceptor role is filled by D183. The interval 329–362 (WKQREGEAEELATELREDGWRGGQEAAKGEQPAC) is disordered.

This sequence belongs to the protein kinase superfamily. Ser/Thr protein kinase family. STKL subfamily.

The catalysed reaction is L-seryl-[protein] + ATP = O-phospho-L-seryl-[protein] + ADP + H(+). It carries out the reaction L-threonyl-[protein] + ATP = O-phospho-L-threonyl-[protein] + ADP + H(+). The polypeptide is Serine/threonine-protein kinase SBK2 (Sbk2) (Mus musculus (Mouse)).